The following is a 287-amino-acid chain: Melatonin receptor type 1B-A (287 aa).

Residues 1–28 are Extracellular-facing; that stretch reads MPENVSLIRNRTEVGQGRAWGSGAGARP. Asparagine 4 and asparagine 10 each carry an N-linked (GlcNAc...) asparagine glycan. A helical membrane pass occupies residues 29-49; sequence AWVVMVLAGVLIFTSVVDVLG. At 50–69 the chain is on the cytoplasmic side; that stretch reads NVLVIISVLRNRKLRNAGNA. The chain crosses the membrane as a helical span at residues 70–90; sequence FVVSLAFADLLVVCYPYPLVL. The Extracellular segment spans residues 91-107; the sequence is HAMLHAGWLPGEMECKV. An intrachain disulfide couples cysteine 105 to cysteine 182. Residues 108-128 form a helical membrane-spanning segment; it reads SGFLMGASVIGSIFNITAIAI. The Cytoplasmic segment spans residues 129-149; that stretch reads NRYCFICQANTYEKIYGRAGT. A helical transmembrane segment spans residues 150-170; sequence LVLLTLVWVLTAIAILPNLSL. Residues 171–192 lie on the Extracellular side of the membrane; sequence GSLTYDPRVYSCTFSQTTSAGY. A helical membrane pass occupies residues 193 to 213; the sequence is TIAVVTVHFLLPIAVVTFCYL. At 214–245 the chain is on the cytoplasmic side; it reads RIWVLVLRVRRRVTTDVRPRLRPSELRHFLTM. Residues 246-266 form a helical membrane-spanning segment; it reads FVVFVLFAVCWAPLNLIGLAV. At 267 to 275 the chain is on the extracellular side; sequence AVDPPRVGP. Residues 276–287 form a helical membrane-spanning segment; that stretch reads LVPDWLFVMSYF.

Belongs to the G-protein coupled receptor 1 family.

The protein localises to the cell membrane. Functionally, high affinity receptor for melatonin. The activity of this receptor is mediated by pertussis toxin sensitive G proteins that inhibits adenylate cyclase activity. This chain is Melatonin receptor type 1B-A (mtnr1ba), found in Danio rerio (Zebrafish).